The following is a 557-amino-acid chain: Small ribosomal subunit protein bS1 (557 aa).

S1 motif domains are found at residues 21–87 (GSIV…LSRE), 105–171 (SATV…VSRR), 192–260 (GMEV…LGLK), 277–347 (GTKL…LGLK), 364–434 (GDRV…LGVK), and 451–520 (GAIV…LSIR).

Belongs to the bacterial ribosomal protein bS1 family.

Functionally, binds mRNA; thus facilitating recognition of the initiation point. It is needed to translate mRNA with a short Shine-Dalgarno (SD) purine-rich sequence. This Dickeya dadantii (strain 3937) (Erwinia chrysanthemi (strain 3937)) protein is Small ribosomal subunit protein bS1 (rpsA).